Reading from the N-terminus, the 251-residue chain is MIQVLNLGHVDYTTAQQLQTTLVDLRKRGVIQDTLLLLEHSPVITMGRNAKQKNIVASQEILAQRGVELIECDRGGDVTFHGPGQLVGYPIFDLRSLNPKIGVIEYVRRIEEVLIRSCGDLGIPTTRVEGLTGVWTVNEPQAKIAAIGVHISRAVTSHGFALNVTTDLDYFKLIVPCGISDKPVTSMQHELGKSLTLEEVMPVITRNFGFIFKEQVLWLESLNDLLPTPEDLPARAPETLRRLHEDDLHLG.

The 188-residue stretch at 29 to 216 (GVIQDTLLLL…NFGFIFKEQV (188 aa)) folds into the BPL/LPL catalytic domain. Substrate contacts are provided by residues 74–81 (RGGDVTFH), 146–148 (AIG), and 159–161 (GFA). The active-site Acyl-thioester intermediate is C177.

It belongs to the LipB family.

It is found in the cytoplasm. The enzyme catalyses octanoyl-[ACP] + L-lysyl-[protein] = N(6)-octanoyl-L-lysyl-[protein] + holo-[ACP] + H(+). It functions in the pathway protein modification; protein lipoylation via endogenous pathway; protein N(6)-(lipoyl)lysine from octanoyl-[acyl-carrier-protein]: step 1/2. Its function is as follows. Catalyzes the transfer of endogenously produced octanoic acid from octanoyl-acyl-carrier-protein onto the lipoyl domains of lipoate-dependent enzymes. Lipoyl-ACP can also act as a substrate although octanoyl-ACP is likely to be the physiological substrate. The polypeptide is Octanoyltransferase (Koribacter versatilis (strain Ellin345)).